The chain runs to 38 residues: Large ribosomal subunit protein bL36 (38 aa).

The protein belongs to the bacterial ribosomal protein bL36 family.

This Prochlorococcus marinus (strain MIT 9312) protein is Large ribosomal subunit protein bL36.